The sequence spans 154 residues: Myoglobin (154 aa).

One can recognise a Globin domain in the interval G2–K148. Phosphoserine is present on S4. Residue H65 participates in nitrite binding. Residue H65 participates in O2 binding. Phosphothreonine is present on T68. Heme b is bound at residue H94.

Belongs to the globin family. Monomeric.

The protein resides in the cytoplasm. The protein localises to the sarcoplasm. The enzyme catalyses Fe(III)-heme b-[protein] + nitric oxide + H2O = Fe(II)-heme b-[protein] + nitrite + 2 H(+). It carries out the reaction H2O2 + AH2 = A + 2 H2O. Monomeric heme protein which primary function is to store oxygen and facilitate its diffusion within muscle tissues. Reversibly binds oxygen through a pentacoordinated heme iron and enables its timely and efficient release as needed during periods of heightened demand. Depending on the oxidative conditions of tissues and cells, and in addition to its ability to bind oxygen, it also has a nitrite reductase activity whereby it regulates the production of bioactive nitric oxide. Under stress conditions, like hypoxia and anoxia, it also protects cells against reactive oxygen species thanks to its pseudoperoxidase activity. This chain is Myoglobin (MB), found in Proechimys guairae (Guaira spiny rat).